A 399-amino-acid polypeptide reads, in one-letter code: NADH-quinone oxidoreductase subunit D 2 (399 aa).

Positions 1–20 (MIASKESNSAATPATSAPTL) are disordered. Residues 9-20 (SAATPATSAPTL) are compositionally biased toward low complexity.

It belongs to the complex I 49 kDa subunit family. In terms of assembly, NDH-1 is composed of 14 different subunits. Subunits NuoB, C, D, E, F, and G constitute the peripheral sector of the complex.

Its subcellular location is the cell inner membrane. It catalyses the reaction a quinone + NADH + 5 H(+)(in) = a quinol + NAD(+) + 4 H(+)(out). In terms of biological role, NDH-1 shuttles electrons from NADH, via FMN and iron-sulfur (Fe-S) centers, to quinones in the respiratory chain. The immediate electron acceptor for the enzyme in this species is believed to be ubiquinone. Couples the redox reaction to proton translocation (for every two electrons transferred, four hydrogen ions are translocated across the cytoplasmic membrane), and thus conserves the redox energy in a proton gradient. This is NADH-quinone oxidoreductase subunit D 2 from Opitutus terrae (strain DSM 11246 / JCM 15787 / PB90-1).